Reading from the N-terminus, the 192-residue chain is Large ribosomal subunit protein bL9 (192 aa).

The tract at residues 172–192 (DALRPEDFFDPEADGVDEDEA) is disordered. A compositionally biased stretch (acidic residues) spans 179-192 (FFDPEADGVDEDEA).

Belongs to the bacterial ribosomal protein bL9 family.

Its function is as follows. Binds to the 23S rRNA. This Rhizobium leguminosarum bv. trifolii (strain WSM2304) protein is Large ribosomal subunit protein bL9.